Reading from the N-terminus, the 156-residue chain is Cyanate hydratase (156 aa).

Residues Arg96, Glu99, and Ser122 contribute to the active site.

Belongs to the cyanase family.

The enzyme catalyses cyanate + hydrogencarbonate + 3 H(+) = NH4(+) + 2 CO2. Functionally, catalyzes the reaction of cyanate with bicarbonate to produce ammonia and carbon dioxide. The sequence is that of Cyanate hydratase from Burkholderia pseudomallei (strain 1106a).